The sequence spans 247 residues: 3-deoxy-manno-octulosonate cytidylyltransferase (247 aa).

The protein belongs to the KdsB family.

It is found in the cytoplasm. It carries out the reaction 3-deoxy-alpha-D-manno-oct-2-ulosonate + CTP = CMP-3-deoxy-beta-D-manno-octulosonate + diphosphate. The protein operates within nucleotide-sugar biosynthesis; CMP-3-deoxy-D-manno-octulosonate biosynthesis; CMP-3-deoxy-D-manno-octulosonate from 3-deoxy-D-manno-octulosonate and CTP: step 1/1. Its pathway is bacterial outer membrane biogenesis; lipopolysaccharide biosynthesis. Its function is as follows. Activates KDO (a required 8-carbon sugar) for incorporation into bacterial lipopolysaccharide in Gram-negative bacteria. This is 3-deoxy-manno-octulosonate cytidylyltransferase from Chlorobium phaeovibrioides (strain DSM 265 / 1930) (Prosthecochloris vibrioformis (strain DSM 265)).